The following is a 351-amino-acid chain: MYSLARPFLFAFDAERAHALALRAIDTAYRTGTTALVATRPVPLPTPAFGLMFPNPVGLGAGLDKNGEHIDALLALGFGFVEIGTVTPKPQEGNPKPRMFRLPEYQAVINRMGFNNLGVDVLVKNVQRARRRGGLLGINIGKNKDTPNEEATSDYRYCMERVYPLADYITVNISSPNTAGLRELQEEQALRRLIADLRETQEALAAQHGKRVPMLVKVAPDLNDRDIDAAARVLADLAVDGVIATNTTVTRTLVASHPMAEQAGGLSGAPLLGQSTLVLRRLRARLPESIPLIGVGGITSGADAVAKMAAGASLVQCYSGLVYRGPRLIGECVDAIRRRRESPSGGAVGPL.

FMN contacts are provided by residues 61–65 (AGLDK) and Thr85. Residue Lys65 participates in substrate binding. Position 110 to 114 (110 to 114 (NRMGF)) interacts with substrate. 2 residues coordinate FMN: Asn139 and Asn172. Asn172 contributes to the substrate binding site. Ser175 (nucleophile) is an active-site residue. Asn177 serves as a coordination point for substrate. Lys217 and Thr245 together coordinate FMN. Substrate is bound at residue 246–247 (NT). Residues Gly268, Gly297, and 318-319 (YS) each bind FMN.

The protein belongs to the dihydroorotate dehydrogenase family. Type 2 subfamily. In terms of assembly, monomer. FMN is required as a cofactor.

It is found in the cell membrane. It carries out the reaction (S)-dihydroorotate + a quinone = orotate + a quinol. It functions in the pathway pyrimidine metabolism; UMP biosynthesis via de novo pathway; orotate from (S)-dihydroorotate (quinone route): step 1/1. Catalyzes the conversion of dihydroorotate to orotate with quinone as electron acceptor. The polypeptide is Dihydroorotate dehydrogenase (quinone) (Xanthomonas campestris pv. campestris (strain 8004)).